We begin with the raw amino-acid sequence, 220 residues long: NAD(P)H-quinone oxidoreductase subunit M, chloroplastic (220 aa).

The transit peptide at 1–37 (MATTASPFLSPAKLSLERRLPRATWTARRSVRFPPVR) directs the protein to the chloroplast. The interval 20–91 (LPRATWTARR…PVQPLAESKN (72 aa)) is disordered. Residues 34–44 (PPVRAQDQQQQ) are compositionally biased toward low complexity.

The protein belongs to the NDH complex subunit M family. In terms of assembly, part of the chloroplast NDH complex, composed of a mixture of chloroplast and nucleus encoded subunits. Component of the NDH subcomplex A, at least composed of ndhH, ndhI, ndhJ, ndhK, ndhL, ndhM, ndhN and ndhO.

It localises to the plastid. Its subcellular location is the chloroplast thylakoid membrane. The catalysed reaction is a plastoquinone + NADH + (n+1) H(+)(in) = a plastoquinol + NAD(+) + n H(+)(out). It catalyses the reaction a plastoquinone + NADPH + (n+1) H(+)(in) = a plastoquinol + NADP(+) + n H(+)(out). Its function is as follows. NDH shuttles electrons from NAD(P)H:plastoquinone, via FMN and iron-sulfur (Fe-S) centers, to quinones in the photosynthetic chain and possibly in a chloroplast respiratory chain. The immediate electron acceptor for the enzyme in this species is believed to be plastoquinone. Couples the redox reaction to proton translocation, and thus conserves the redox energy in a proton gradient. The protein is NAD(P)H-quinone oxidoreductase subunit M, chloroplastic of Oryza sativa subsp. indica (Rice).